The sequence spans 736 residues: MYSRRELEDLEYRYYSEMKDGTRKVKISESLFRCPFCYIDRKRDYQFDDLLRHASGIGGSSRTKDGRDKARHLALERYMRKYLRPRERPRPSPTSDVSSLPKEEFTGKWKSTLSTTEEGEFITTENSSSPHIVKAEPKFVSGDDSGRSGEERLKFSDKPDPFFSNEDKSYPAKRPCLVSGAKEGDEPVQRIGLSHGASFAPTYPQKLVSLGAGNGDQMYVHPWKGILANMKRTFNEKTRKYAGESGSKIREDLIKKGFNPHKVTPLWNGRLGFTGFAIVDFGKEWEGFRNATMFDKHFEVSQCGKRDHDLTRDPGDKLYGWVAKQDDYYSRTAIGDHLRKQGDLKSVSGKEAEDQRKTFTLVSNLENTLVTKSDNLQQMESIYKQTSSVLEKRMKEKDEMINTHNEKMSIMQQTARDYLASIYEEHEKASQHLEAQRKEYEDRENYLDKCQAKNKTERRKLQWQKHKNLMATQEQNKADEDMMRLAEQQQREKDELRKQVRELEEKIDAEQALELEIERMRGDLQVMGHMQEGEGEDSKIKEMIEKTKEELKEKEEDWEYQESLYQTLVVKHGYTNDELQDARKALIRSMRELTTRAYIGVKRMGALDETPFKKVAKEKYPAVEADKKAEELCSLWEEHLGDSAWHPIKVVEKDGIAKEELNEEDEKLQELRKELGEEVYAAVTQALKERNEYNGSGRYIVPELWNFKQNRKASIKEGVVYLVNSWKQKKPKPKRR.

2 stretches are compositionally biased toward basic and acidic residues: residues 80-90 (RKYLRPRERPR) and 144-167 (DSGR…SNED). Residues 80-167 (RKYLRPRERP…KPDPFFSNED (88 aa)) form a disordered region. Residues 360-597 (TLVSNLENTL…RSMRELTTRA (238 aa)) are a coiled coil.

Functionally, acts in association with FDM3 and FDM5 for RNA-directed DNA methylation (RdDM). This Arabidopsis thaliana (Mouse-ear cress) protein is Factor of DNA methylation 4.